The primary structure comprises 159 residues: Heterocyst differentiation protein HetP (159 aa).

Residues 1–50 (MNQNTTGITNYNKAINPQQFDKVVEAILAGKYSWACVLMLRFAGYNPMHY) are required to complement a hetP deletion.

It belongs to the HetP family. As to quaternary structure, in bacterial two-hybrid assays interacts weakly with Asl1930, Alr2902 and Alr3234.

Its function is as follows. Promotes heterocyst differentiation and commitment when nitrogen is limiting. Interplay between the 4 HetP paralogs controls the timing of commitment to heterocyst formation and its duration. Epistatic analysis show that the 3 paralogs act upstream of hetP to delay commitment (asl1930, alr3234) or inhibit development (alr2902). Asl1930 and Alr3234 must also attenuate the activity of Alr2902. Required for heterocyst formation. Functions directly downstream of master regulator HetR to promote heterocyst differentiation, functioning downstream of patterning (cell choice). Partially functionally redundant with homologs alr2902 and asl1930 but not alr3234. Overexpression leads to more than wild-type levels of heterocysts. Overexpression in the absence of hetR partially bypasses hetR deletion, allowing differentiation of heterocysts, although they only fix nitrogen in the absence of oxygen (a Fox- Fix+ phenotype), suggesting they are not fully. This is Heterocyst differentiation protein HetP from Nostoc sp. (strain PCC 7120 / SAG 25.82 / UTEX 2576).